We begin with the raw amino-acid sequence, 193 residues long: Ubiquitin-conjugating enzyme E2 E1 (193 aa).

Residues 1-45 (MSDDDSRASTSSSSSSSSNQQTEKEGSTPKKKESKVSMSKNSKLL) are disordered. S2 is subject to N-acetylserine. Low complexity predominate over residues 8-18 (ASTSSSSSSSS). Basic and acidic residues predominate over residues 22–35 (TEKEGSTPKKKESK). Polar residues predominate over residues 36–45 (VSMSKNSKLL). Residues 47-193 (TSAKRIQKEL…ARQWTKRYAT (147 aa)) form the UBC core domain. Residue C131 is the Glycyl thioester intermediate of the active site. K136 is covalently cross-linked (Glycyl lysine isopeptide (Lys-Gly) (interchain with G-Cter in ISG15)).

This sequence belongs to the ubiquitin-conjugating enzyme family. Interacts with RNF14. In terms of processing, ISGylation suppresses ubiquitin E2 enzyme activity. Autoubiquitinated.

The protein resides in the nucleus. The catalysed reaction is S-ubiquitinyl-[E1 ubiquitin-activating enzyme]-L-cysteine + [E2 ubiquitin-conjugating enzyme]-L-cysteine = [E1 ubiquitin-activating enzyme]-L-cysteine + S-ubiquitinyl-[E2 ubiquitin-conjugating enzyme]-L-cysteine.. It catalyses the reaction S-ubiquitinyl-[E1 ubiquitin-activating enzyme]-L-cysteine + [acceptor protein]-L-lysine = [E1 ubiquitin-activating enzyme]-L-cysteine + N(6)-monoubiquitinyl-[acceptor protein]-L-lysine.. Its pathway is protein modification; protein ubiquitination. Its function is as follows. Accepts ubiquitin from the E1 complex and catalyzes its covalent attachment to other proteins. Catalyzes the covalent attachment of ISG15 to other proteins. Mediates the selective degradation of short-lived and abnormal proteins. In vitro also catalyzes 'Lys-48'-linked polyubiquitination. The sequence is that of Ubiquitin-conjugating enzyme E2 E1 (Ube2e1) from Mus musculus (Mouse).